We begin with the raw amino-acid sequence, 213 residues long: Imidazole glycerol phosphate synthase subunit HisH (213 aa).

The Glutamine amidotransferase type-1 domain maps to 4–213; it reads SIAIVDYGMG…LYRNFVHWKP (210 aa). Cysteine 83 (nucleophile) is an active-site residue. Active-site residues include histidine 193 and glutamate 195.

Heterodimer of HisH and HisF.

The protein localises to the cytoplasm. It catalyses the reaction 5-[(5-phospho-1-deoxy-D-ribulos-1-ylimino)methylamino]-1-(5-phospho-beta-D-ribosyl)imidazole-4-carboxamide + L-glutamine = D-erythro-1-(imidazol-4-yl)glycerol 3-phosphate + 5-amino-1-(5-phospho-beta-D-ribosyl)imidazole-4-carboxamide + L-glutamate + H(+). It carries out the reaction L-glutamine + H2O = L-glutamate + NH4(+). It participates in amino-acid biosynthesis; L-histidine biosynthesis; L-histidine from 5-phospho-alpha-D-ribose 1-diphosphate: step 5/9. In terms of biological role, IGPS catalyzes the conversion of PRFAR and glutamine to IGP, AICAR and glutamate. The HisH subunit catalyzes the hydrolysis of glutamine to glutamate and ammonia as part of the synthesis of IGP and AICAR. The resulting ammonia molecule is channeled to the active site of HisF. This Burkholderia multivorans (strain ATCC 17616 / 249) protein is Imidazole glycerol phosphate synthase subunit HisH.